The primary structure comprises 809 residues: Ubiquitin carboxyl-terminal hydrolase 1 (809 aa).

The 638-residue stretch at 101–738 folds into the USP domain; that stretch reads AGLVNDGNTC…GVFMLFYEYD (638 aa). The active-site Nucleophile is the Cys110. The interval 143–195 is disordered; the sequence is NEHNEEGNGQESAQDEATHKKNTRKGGKVYGKHKKKLNRKSSSKEDEEKSQEP. Over residues 162-183 the composition is skewed to basic residues; sequence KKNTRKGGKVYGKHKKKLNRKS. Positions 184-194 are enriched in basic and acidic residues; sequence SSKEDEEKSQE. Residues Ser530, Ser531, and Ser555 each carry the phosphoserine modification. The interval 569 to 596 is disordered; it reads ASHYNHTKDISNYDPLNGEVDGVTSDDE. Phosphoserine occurs at positions 618 and 638. A Phosphothreonine modification is found at Thr652. Phosphoserine is present on residues Ser653, Ser654, and Ser670. The Proton acceptor role is filled by His697. The segment at 750-809 is disordered; the sequence is LEAIQSNNEEDDEKEQEQKGVQEPKESQEQGEGEEQEEGQEQMKFERTEDHRDISGKDVN. Residue Ser755 is modified to Phosphoserine. The span at 765-777 shows a compositional bias: basic and acidic residues; the sequence is QEQKGVQEPKESQ. Acidic residues predominate over residues 778-789; sequence EQGEGEEQEEGQ. Basic and acidic residues predominate over residues 790-809; the sequence is EQMKFERTEDHRDISGKDVN.

This sequence belongs to the peptidase C19 family.

It carries out the reaction Thiol-dependent hydrolysis of ester, thioester, amide, peptide and isopeptide bonds formed by the C-terminal Gly of ubiquitin (a 76-residue protein attached to proteins as an intracellular targeting signal).. Functionally, has an ATP-independent isopeptidase activity, cleaving at the C-terminus of the ubiquitin moiety in natural or engineered linear fusion proteins, irrespective of their size or the presence of an N-terminal extension to ubiquitin. The sequence is that of Ubiquitin carboxyl-terminal hydrolase 1 (UBP1) from Saccharomyces cerevisiae (strain ATCC 204508 / S288c) (Baker's yeast).